We begin with the raw amino-acid sequence, 984 residues long: PAX-interacting protein 1 (984 aa).

BRCT domains follow at residues V8 to P93 and E94 to P183. The segment at E94–P183 is interaction with PAGR1. Disordered regions lie at residues V187–V271 and Q417–H509. Over residues Y188 to S208 the composition is skewed to acidic residues. The segment covering K217–S229 has biased composition (low complexity). Phosphoserine is present on residues S227 and S235. A compositionally biased stretch (pro residues) spans P424 to P454. Residues L455–L485 show a composition bias toward low complexity. Positions P486–Q499 are enriched in pro residues. An interaction with TP53BP1 region spans residues P505–N984. BRCT domains lie at P516–H609 and P616–G704. Positions R583 to K600 match the Nuclear localization signal motif. The tract at residues K750–P771 is disordered. The span at N752 to S761 shows a compositional bias: polar residues. 2 consecutive BRCT domains span residues T781–L862 and H883–F924.

Interacts with the C-terminal transactivation domain of PAX2. Forms a constitutive complex with PAGR1 independently of the MLL2/MLL3 complex. Interacts with TP53BP1 (when phosphorylated at the N-terminus by ATM). Interacts with HLTF. Component of the KMT2 family MLL2/MLL3 complex (also named ASCOM complex), at least composed of the HMTs KMT2D and/or KMT2C, the common subunits ASH2L, RBBP5, WDR5 and DPY30, and the complex type-specific subunits PAXIP1/PTIP, PAGR1, NCOA6 and KDM6A; required for the association of PAGR1 with the MLL2/MLL3 complex. Interacts with NUPR1; this interaction prevents PAXIP1 inhibition of PAX2 transcription factor activity.

The protein resides in the nucleus matrix. Its subcellular location is the chromosome. Involved in DNA damage response and in transcriptional regulation through histone methyltransferase (HMT) complexes. Plays a role in early development. In DNA damage response is required for cell survival after ionizing radiation. In vitro shown to be involved in the homologous recombination mechanism for the repair of double-strand breaks (DSBs). Its localization to DNA damage foci requires RNF8 and UBE2N. Recruits TP53BP1 to DNA damage foci and, at least in particular repair processes, effective DNA damage response appears to require the association with TP53BP1 phosphorylated by ATM at 'Ser-25'. Together with TP53BP1 regulates ATM association. Proposed to recruit PAGR1 to sites of DNA damage and the PAGR1:PAXIP1 complex is required for cell survival in response to DNA damage; the function is probably independent of MLL-containing histone methyltransferase (HMT) complexes. However, this function has been questioned. Promotes ubiquitination of PCNA following UV irradiation and may regulate recruitment of polymerase eta and RAD51 to chromatin after DNA damage. Proposed to be involved in transcriptional regulation by linking MLL-containing histone methyltransferase (HMT) complexes to gene promoters by interacting with promoter-bound transcription factors such as PAX2. Associates with gene promoters that are known to be regulated by KMT2D/MLL2. During immunoglobulin class switching in activated B-cells is involved in trimethylation of histone H3 at 'Lys-4' and in transcription initiation of downstream switch regions at the immunoglobulin heavy-chain (Igh) locus; this function appears to involve the recruitment of MLL-containing HMT complexes. Conflictingly, its function in transcriptional regulation during immunoglobulin class switching is reported to be independent of the MLL2/MLL3 complex. This chain is PAX-interacting protein 1 (PAXIP1), found in Bos taurus (Bovine).